We begin with the raw amino-acid sequence, 691 residues long: Elongation factor G (691 aa).

The 276-residue stretch at 8–283 (KRVRNIGIAA…AVVAYLPAPD (276 aa)) folds into the tr-type G domain. Residues 17 to 24 (AHIDAGKT), 81 to 85 (DTPGH), and 135 to 138 (NKMD) contribute to the GTP site.

It belongs to the TRAFAC class translation factor GTPase superfamily. Classic translation factor GTPase family. EF-G/EF-2 subfamily.

The protein resides in the cytoplasm. Its function is as follows. Catalyzes the GTP-dependent ribosomal translocation step during translation elongation. During this step, the ribosome changes from the pre-translocational (PRE) to the post-translocational (POST) state as the newly formed A-site-bound peptidyl-tRNA and P-site-bound deacylated tRNA move to the P and E sites, respectively. Catalyzes the coordinated movement of the two tRNA molecules, the mRNA and conformational changes in the ribosome. The sequence is that of Elongation factor G from Campylobacter lari (strain RM2100 / D67 / ATCC BAA-1060).